The primary structure comprises 178 residues: ATP synthase subunit delta (178 aa).

This sequence belongs to the ATPase delta chain family. In terms of assembly, F-type ATPases have 2 components, F(1) - the catalytic core - and F(0) - the membrane proton channel. F(1) has five subunits: alpha(3), beta(3), gamma(1), delta(1), epsilon(1). F(0) has three main subunits: a(1), b(2) and c(10-14). The alpha and beta chains form an alternating ring which encloses part of the gamma chain. F(1) is attached to F(0) by a central stalk formed by the gamma and epsilon chains, while a peripheral stalk is formed by the delta and b chains.

It is found in the cell membrane. F(1)F(0) ATP synthase produces ATP from ADP in the presence of a proton or sodium gradient. F-type ATPases consist of two structural domains, F(1) containing the extramembraneous catalytic core and F(0) containing the membrane proton channel, linked together by a central stalk and a peripheral stalk. During catalysis, ATP synthesis in the catalytic domain of F(1) is coupled via a rotary mechanism of the central stalk subunits to proton translocation. Functionally, this protein is part of the stalk that links CF(0) to CF(1). It either transmits conformational changes from CF(0) to CF(1) or is implicated in proton conduction. This chain is ATP synthase subunit delta, found in Streptococcus mutans serotype c (strain ATCC 700610 / UA159).